The following is a 344-amino-acid chain: Anthranilate phosphoribosyltransferase (344 aa).

Residues G85, 88–89, T93, 95–98, 113–121, and S125 contribute to the 5-phospho-alpha-D-ribose 1-diphosphate site; these read GD, NIST, and KHGGRSVSS. Anthranilate is bound at residue G85. S97 is a binding site for Mg(2+). Residue R171 coordinates anthranilate. The Mg(2+) site is built by D230 and E231.

This sequence belongs to the anthranilate phosphoribosyltransferase family. Homodimer. Mg(2+) serves as cofactor.

It carries out the reaction N-(5-phospho-beta-D-ribosyl)anthranilate + diphosphate = 5-phospho-alpha-D-ribose 1-diphosphate + anthranilate. It participates in amino-acid biosynthesis; L-tryptophan biosynthesis; L-tryptophan from chorismate: step 2/5. Catalyzes the transfer of the phosphoribosyl group of 5-phosphorylribose-1-pyrophosphate (PRPP) to anthranilate to yield N-(5'-phosphoribosyl)-anthranilate (PRA). The protein is Anthranilate phosphoribosyltransferase of Acidovorax ebreus (strain TPSY) (Diaphorobacter sp. (strain TPSY)).